The following is a 199-amino-acid chain: dITP/XTP pyrophosphatase (199 aa).

8–13 (TSNINK) contacts substrate. Aspartate 68 serves as the catalytic Proton acceptor. A Mg(2+)-binding site is contributed by aspartate 68. Substrate contacts are provided by residues serine 69, 155–158 (FGYD), lysine 177, and 182–183 (HR).

This sequence belongs to the HAM1 NTPase family. Homodimer. The cofactor is Mg(2+).

It carries out the reaction XTP + H2O = XMP + diphosphate + H(+). The catalysed reaction is dITP + H2O = dIMP + diphosphate + H(+). It catalyses the reaction ITP + H2O = IMP + diphosphate + H(+). Its function is as follows. Pyrophosphatase that catalyzes the hydrolysis of nucleoside triphosphates to their monophosphate derivatives, with a high preference for the non-canonical purine nucleotides XTP (xanthosine triphosphate), dITP (deoxyinosine triphosphate) and ITP. Seems to function as a house-cleaning enzyme that removes non-canonical purine nucleotides from the nucleotide pool, thus preventing their incorporation into DNA/RNA and avoiding chromosomal lesions. The sequence is that of dITP/XTP pyrophosphatase from Borrelia duttonii (strain Ly).